The sequence spans 188 residues: Ribosome-recycling factor (188 aa).

Belongs to the RRF family.

The protein localises to the cytoplasm. Its function is as follows. Responsible for the release of ribosomes from messenger RNA at the termination of protein biosynthesis. May increase the efficiency of translation by recycling ribosomes from one round of translation to another. This Acidiphilium cryptum (strain JF-5) protein is Ribosome-recycling factor.